We begin with the raw amino-acid sequence, 29 residues long: Beta-theraphotoxin-Gr1b (29 aa).

Disulfide bonds link C2-C16, C9-C21, and C15-C25. L29 is modified (leucine amide).

Belongs to the neurotoxin 30 (phrixotoxin) family. In terms of tissue distribution, expressed by the venom gland.

Its subcellular location is the secreted. Inhibits the voltage-gated sodium channels Nav1.1/SCN1A (IC(50)=360 nM), Nav1.2/SCN2A (IC(50)=600 nM), Nav1.3/SCN3A (IC(50)=1280), Nav1.4/SCN4A (IC(50)=330 nM), Nav1.6/SCN8A (IC(50)=1200 nM), Nav1.7/SCN9A (IC(50)=1-40 nM), and voltage-gated potassium channels Kv11.1/KCNH2 (IC(50)=4.8 uM). Induces analgesia in mammals. This analgesia is mediated by a non-opioid receptor related mechanism. The chain is Beta-theraphotoxin-Gr1b from Grammostola rosea (Chilean rose tarantula).